Here is a 387-residue protein sequence, read N- to C-terminus: Norsolorinic acid reductase stcV (387 aa).

Residue Asp69 participates in NADP(+) binding. The active-site Proton donor is the Tyr74. Residue His148 participates in substrate binding. NADP(+) contacts are provided by residues 178-179 (SD), Gln204, 233-243 (GALGRGQYKSA), and 301-309 (RTVEQLEAN).

The protein belongs to the aldo/keto reductase family. Aldo/keto reductase 2 subfamily.

Its pathway is mycotoxin biosynthesis; sterigmatocystin biosynthesis. Norsolorinic acid reductase; part of the gene cluster that mediates the biosynthesis of sterigmatocystin (ST), a polyketide-derived furanocoumarin which is part of the most toxic and carcinogenic compounds among the known mycotoxins. The first step in the biosynthesis of sterigmatocystin is the production of hexanoate by the fatty acid synthase (FAS) units stcJ and stcK. The polyketide backbone is assembled by the non-reducing polyketide synthase stcA by condensation of the starter hexanoyl-CoA and 7 malonyl-CoA extender units followed by cyclization and release of norsolorinic acid. Norsolorinic acid is the first stable intermediate in the biosynthesis of sterigmatocystin and is converted into averantin (AVN) by the ketoreductase stcE which reduces the hexanoate ketone to an alcohol. Averantin is then oxidized into 5'-hydroxyaverantin (HAVN) by the cytochrome P450 monooxygenase stcF. 5'-hydroxyaverantin is further converted to 5'-oxyaverantin (OAVN) by the 5'-hydroxyaverantin dehydrogenase stcG. The next step is the conversion of OAVN into averufin (AVF) which is catalyzed by a yet to be identified enzyme. The cytochrome P450 monooxygenase stcB and the flavin-binding monooxygenase stcW are both required for the conversion of averufin to 1-hydroxyversicolorone. The esterase stcI probably catalyzes the formation of versiconal hemiacetal acetate from 1-hydroxyversicolorone. The oxydoreductase stcN then probably catalyzes the biosynthetic step from versiconal to versicolorin B (VERB). The next step is performed by the versicolorin B desaturase stcL to produce versicolorin A (VERA). The ketoreductase stcU and the cytochrome P450 monooxygenase stcS are involved in the conversion of versicolorin A to demethylsterigmatocystin. The Baeyer-Villiger oxidas stcQ and the reductase stcR might be involved in the biosynthetic step from versicolorin A to demethylsterigmatocystin. The final step in the biosynthesis of sterigmatocystin is the methylation of demethylsterigmatocystin catalyzed by the methyltransferase stcP. This Emericella nidulans (strain FGSC A4 / ATCC 38163 / CBS 112.46 / NRRL 194 / M139) (Aspergillus nidulans) protein is Norsolorinic acid reductase stcV.